Consider the following 373-residue polypeptide: Leucine-, isoleucine-, valine-, threonine-, and alanine-binding protein (373 aa).

An N-terminal signal peptide occupies residues Met1–Ala26. Cys80 and Cys105 are disulfide-bonded.

It belongs to the leucine-binding protein family.

It is found in the periplasm. Functionally, component of the high-affinity leucine, isoleucine, valine transport system I (LIV-I), which is operative without Na(+) and is specific for alanine and threonine, in addition to branched-chain amino acids. Binds L-leucine, L-isoleucine, L-valine, L-threonine and L-alanine with nanomolar affinities. Can also bind L-homoserine with high affinity. The protein is Leucine-, isoleucine-, valine-, threonine-, and alanine-binding protein (braC) of Pseudomonas aeruginosa (strain ATCC 15692 / DSM 22644 / CIP 104116 / JCM 14847 / LMG 12228 / 1C / PRS 101 / PAO1).